The chain runs to 75 residues: Large ribosomal subunit protein bL31 (75 aa).

Positions 16, 18, 37, and 40 each coordinate Zn(2+).

This sequence belongs to the bacterial ribosomal protein bL31 family. Type A subfamily. Part of the 50S ribosomal subunit. It depends on Zn(2+) as a cofactor.

In terms of biological role, binds the 23S rRNA. The protein is Large ribosomal subunit protein bL31 of Pseudomonas syringae pv. tomato (strain ATCC BAA-871 / DC3000).